Here is a 232-residue protein sequence, read N- to C-terminus: Ubiquinone biosynthesis O-methyltransferase (232 aa).

The S-adenosyl-L-methionine site is built by Arg-36, Gly-55, Asp-76, and Met-120.

Belongs to the methyltransferase superfamily. UbiG/COQ3 family.

The catalysed reaction is a 3-demethylubiquinol + S-adenosyl-L-methionine = a ubiquinol + S-adenosyl-L-homocysteine + H(+). It carries out the reaction a 3-(all-trans-polyprenyl)benzene-1,2-diol + S-adenosyl-L-methionine = a 2-methoxy-6-(all-trans-polyprenyl)phenol + S-adenosyl-L-homocysteine + H(+). The protein operates within cofactor biosynthesis; ubiquinone biosynthesis. O-methyltransferase that catalyzes the 2 O-methylation steps in the ubiquinone biosynthetic pathway. This is Ubiquinone biosynthesis O-methyltransferase from Burkholderia lata (strain ATCC 17760 / DSM 23089 / LMG 22485 / NCIMB 9086 / R18194 / 383).